The primary structure comprises 959 residues: Lon protease homolog, mitochondrial (959 aa).

The N-terminal 67 residues, 1–67 (MAASTGYVRL…GPAIGGQWRG (67 aa)), are a transit peptide targeting the mitochondrion. Disordered stretches follow at residues 77–102 (GAFSGGEDASEGGAEEGAGGAGGSAG) and 218–257 (RQLEVEPEEPEAENKHKPRRKSKRGKKEAEDELSARHPAE). The span at 91-102 (EEGAGGAGGSAG) shows a compositional bias: gly residues. The region spanning 124-370 (LPLIAITRNP…KALSLLKKEF (247 aa)) is the Lon N-terminal domain. The span at 233–243 (HKPRRKSKRGK) shows a compositional bias: basic residues. Residues 244–256 (KEAEDELSARHPA) show a composition bias toward basic and acidic residues. ATP is bound at residue 523–530 (GPPGVGKT). The Lon proteolytic domain maps to 759–949 (VTPPGVVMGL…REIFDIAFPD (191 aa)). Residues S855 and K898 contribute to the active site.

The protein belongs to the peptidase S16 family. As to quaternary structure, homohexamer. Organized in a ring with a central cavity. The ATP-binding and proteolytic domains (AP-domain) form a hexameric chamber, while the N-terminal domain is arranged as a trimer of dimers. DNA and RNA binding is stimulated by substrate and inhibited by ATP binding. Interacts with TWNK and mitochondrial DNA polymerase subunit POLG. In terms of tissue distribution, duodenum, heart, lung and liver, but not thymus.

The protein localises to the mitochondrion matrix. It carries out the reaction Hydrolysis of proteins in presence of ATP.. With respect to regulation, peptidase activity is subject to substrate inhibition by ATP. Functionally, ATP-dependent serine protease that mediates the selective degradation of misfolded, unassembled or oxidatively damaged polypeptides as well as certain short-lived regulatory proteins in the mitochondrial matrix. Endogenous substrates include mitochondrial steroidogenic acute regulatory (StAR) protein, DELE1, helicase Twinkle (TWNK) and the large ribosomal subunit protein MRPL32/bL32m. MRPL32/bL32m is protected from degradation by LONP1 when it is bound to a nucleic acid (RNA), but TWNK is not. May also have a chaperone function in the assembly of inner membrane protein complexes. Participates in the regulation of mitochondrial gene expression and in the maintenance of the integrity of the mitochondrial genome. Binds to mitochondrial promoters and RNA in a single-stranded, site-specific, and strand-specific manner. May regulate mitochondrial DNA replication and/or gene expression using site-specific, single-stranded DNA binding to target the degradation of regulatory proteins binding to adjacent sites in mitochondrial promoters. In Homo sapiens (Human), this protein is Lon protease homolog, mitochondrial.